The following is a 407-amino-acid chain: 1-deoxy-D-xylulose 5-phosphate reductoisomerase (407 aa).

Positions 25, 26, 27, 28, 53, and 136 each coordinate NADPH. A 1-deoxy-D-xylulose 5-phosphate-binding site is contributed by lysine 137. Glutamate 138 is a binding site for NADPH. Aspartate 162 lines the Mn(2+) pocket. 1-deoxy-D-xylulose 5-phosphate contacts are provided by serine 163, glutamate 164, serine 188, and histidine 211. Mn(2+) is bound at residue glutamate 164. Glycine 217 serves as a coordination point for NADPH. 1-deoxy-D-xylulose 5-phosphate-binding residues include serine 224, asparagine 229, lysine 230, and glutamate 233. Glutamate 233 contributes to the Mn(2+) binding site.

Belongs to the DXR family. Mg(2+) is required as a cofactor. It depends on Mn(2+) as a cofactor.

It carries out the reaction 2-C-methyl-D-erythritol 4-phosphate + NADP(+) = 1-deoxy-D-xylulose 5-phosphate + NADPH + H(+). It functions in the pathway isoprenoid biosynthesis; isopentenyl diphosphate biosynthesis via DXP pathway; isopentenyl diphosphate from 1-deoxy-D-xylulose 5-phosphate: step 1/6. Functionally, catalyzes the NADPH-dependent rearrangement and reduction of 1-deoxy-D-xylulose-5-phosphate (DXP) to 2-C-methyl-D-erythritol 4-phosphate (MEP). The polypeptide is 1-deoxy-D-xylulose 5-phosphate reductoisomerase (Bradyrhizobium diazoefficiens (strain JCM 10833 / BCRC 13528 / IAM 13628 / NBRC 14792 / USDA 110)).